A 135-amino-acid polypeptide reads, in one-letter code: Fatty acid-binding protein 5 (135 aa).

The residue at position 2 (alanine 2) is an N-acetylalanine. At serine 3 the chain carries Phosphoserine. The Nuclear localization signal motif lies at 24–34; the sequence is KELGVGLALRK. The 1-eicosanoylglycerol site is built by cysteine 43, threonine 56, and arginine 109. The cysteines at positions 120 and 127 are disulfide-linked. 129-131 lines the 1-eicosanoylglycerol pocket; it reads RVY. 129–131 is a binding site for (9Z,12Z)-octadecadienoate; that stretch reads RVY. Tyrosine 131 lines the hexadecanoate pocket. Tyrosine 131 contacts N-eicosanoyl ethanolamine. The residue at position 131 (tyrosine 131) is a Phosphotyrosine.

The protein belongs to the calycin superfamily. Fatty-acid binding protein (FABP) family. Monomer. As to expression, widely expressed.

Its subcellular location is the cytoplasm. The protein localises to the nucleus. It is found in the synapse. The protein resides in the postsynaptic density. It localises to the secreted. The enzyme catalyses hexadecanoate(out) = hexadecanoate(in). It catalyses the reaction (9Z,12Z)-octadecadienoate(out) = (9Z,12Z)-octadecadienoate(in). It carries out the reaction (9Z)-octadecenoate(out) = (9Z)-octadecenoate(in). Intracellular carrier for long-chain fatty acids and related active lipids, such as endocannabinoids, that regulate the metabolism and actions of the ligands they bind. In addition to the cytosolic transport, selectively delivers specific fatty acids from the cytosol to the nucleus, wherein they activate nuclear receptors. Delivers retinoic acid to the nuclear receptor peroxisome proliferator-activated receptor delta; which promotes proliferation and survival. May also serve as a synaptic carrier of endocannabinoid at central synapses and thus controls retrograde endocannabinoid signaling. Modulates inflammation by regulating PTGES induction via NF-kappa-B activation, and prostaglandin E2 (PGE2) biosynthesis during inflammation. May be involved in keratinocyte differentiation. The chain is Fatty acid-binding protein 5 from Mus musculus (Mouse).